Reading from the N-terminus, the 200-residue chain is Pre-mRNA cleavage factor Im 25 kDa subunit 2 (200 aa).

Residues 45–172 (GMRTSVEGIL…KLLAVPLFEL (128 aa)) enclose the Nudix hydrolase domain. The tract at residues 72-74 (TFC) is interaction with RNA. The short motif at 79–100 (GRLKPGENEADGLKRKLTSKLG) is the Nudix box element.

This sequence belongs to the Nudix hydrolase family. CPSF5 subfamily. In terms of assembly, homodimer. Component of the cleavage factor Im (CFIm) complex. Forms a complex with cleavage and polyadenylation specificity factor (CPSF) subunits FIPS5, PAPS4 and CPSF30.

The protein localises to the nucleus. Functionally, component of the cleavage factor Im (CFIm) complex that plays a key role in pre-mRNA 3'-processing. Involved in association with CPSF6 or CPSF7 in pre-MRNA 3'-end poly(A) site cleavage and poly(A) addition. NUDT21/CPSF5 binds to cleavage and polyadenylation RNA substrates. The homodimer mediates simultaneous sequence-specific recognition of two 5'-UGUA-3' elements within the pre-mRNA. Binds to, but does not hydrolyze mono- and di-adenosine nucleotides. May have a role in mRNA export. This chain is Pre-mRNA cleavage factor Im 25 kDa subunit 2, found in Arabidopsis thaliana (Mouse-ear cress).